The sequence spans 212 residues: Uracil phosphoribosyltransferase (212 aa).

Residues arginine 78, arginine 103, and aspartate 130–serine 138 contribute to the 5-phospho-alpha-D-ribose 1-diphosphate site. Uracil contacts are provided by residues isoleucine 193 and glycine 198–alanine 200. Aspartate 199 provides a ligand contact to 5-phospho-alpha-D-ribose 1-diphosphate.

It belongs to the UPRTase family. The cofactor is Mg(2+).

It carries out the reaction UMP + diphosphate = 5-phospho-alpha-D-ribose 1-diphosphate + uracil. Its pathway is pyrimidine metabolism; UMP biosynthesis via salvage pathway; UMP from uracil: step 1/1. Its activity is regulated as follows. Allosterically activated by GTP. Functionally, catalyzes the conversion of uracil and 5-phospho-alpha-D-ribose 1-diphosphate (PRPP) to UMP and diphosphate. The chain is Uracil phosphoribosyltransferase from Pseudomonas fluorescens (strain Pf0-1).